Here is a 377-residue protein sequence, read N- to C-terminus: MYLKSLQLRYFRNYREQVIDFAAPKTILVGQNAQGKSNLLEAVELLSTLRSHRSHRDRELVLSGQENGQIIATIERDSGPLDLTLNLRSNGRRTLMVNSEPVRRHLDFLGHLNAVEFSSLDLDLVRGTPAERRNWLDNVLIQLEPFYAHLLQQYNHVLRQRNAFLKSYQREGSLDHTELKLWDQQLASTGTRLTRRRQRLLVRLAPLATHWHQAISGKNEDLQVHYAPNVPLEGDEPEAIYQAFLEKLQQKAIAEQHQGTSLVGPHRDEVELIINQTPARQYGSQGQQRTLVLALKLAELKLIEEVIGEPPLLLLDDVLAELDLQRQNQLLETIQDRFQTLITTTHLGAFDAQWLKSAQILEVAGGVIFNSNHCDRR.

Residue 30-37 (GQNAQGKS) participates in ATP binding.

Belongs to the RecF family.

It is found in the cytoplasm. The RecF protein is involved in DNA metabolism; it is required for DNA replication and normal SOS inducibility. RecF binds preferentially to single-stranded, linear DNA. It also seems to bind ATP. The protein is DNA replication and repair protein RecF of Cyanothece sp. (strain PCC 7425 / ATCC 29141).